A 291-amino-acid polypeptide reads, in one-letter code: Nucleotide-binding protein lhv_0732 (291 aa).

13–20 contacts ATP; the sequence is GMSGAGKT. Residue 61-64 participates in GTP binding; sequence DLRV.

Belongs to the RapZ-like family.

Its function is as follows. Displays ATPase and GTPase activities. This chain is Nucleotide-binding protein lhv_0732, found in Lactobacillus helveticus (strain DPC 4571).